The chain runs to 450 residues: Signal recognition particle protein (450 aa).

GTP-binding positions include 107–114 (GLQGSGKT), 190–194 (DTAGR), and 248–251 (TKTD).

This sequence belongs to the GTP-binding SRP family. SRP54 subfamily. Part of the signal recognition particle protein translocation system, which is composed of SRP and FtsY. SRP is a ribonucleoprotein composed of Ffh and a 4.5S RNA molecule.

Its subcellular location is the cytoplasm. The catalysed reaction is GTP + H2O = GDP + phosphate + H(+). Its function is as follows. Involved in targeting and insertion of nascent membrane proteins into the cytoplasmic membrane. Binds to the hydrophobic signal sequence of the ribosome-nascent chain (RNC) as it emerges from the ribosomes. The SRP-RNC complex is then targeted to the cytoplasmic membrane where it interacts with the SRP receptor FtsY. Interaction with FtsY leads to the transfer of the RNC complex to the Sec translocase for insertion into the membrane, the hydrolysis of GTP by both Ffh and FtsY, and the dissociation of the SRP-FtsY complex into the individual components. This Buchnera aphidicola subsp. Baizongia pistaciae (strain Bp) protein is Signal recognition particle protein.